Consider the following 251-residue polypeptide: MRKPVIAGNWKLFKTKNEALALIEELAPLVSGVDSVEIVVAPVFTVLPTLPAALAGTGISLAAQDVFWEEEGAFTGEVSPRMLLDAGASHVIIGHSERRQYFGETEETVNKKVKAALKGALVPIVCIGETLEAREAGDTFKVLERQLKGGLEGLTGTQFAPVIVAYEPVWAIGTGKVASDDQAQEAHAFIRGVIAGLFGKSAADKVRILYGGSVKPDNVKGLMSRPDIDGALVGGASLKGASFASIVRYSE.

Residue 9-11 (NWK) coordinates substrate. H95 (electrophile) is an active-site residue. Residue E167 is the Proton acceptor of the active site. Substrate is bound by residues G173, S213, and 234–235 (GG).

This sequence belongs to the triosephosphate isomerase family. As to quaternary structure, homodimer.

Its subcellular location is the cytoplasm. It carries out the reaction D-glyceraldehyde 3-phosphate = dihydroxyacetone phosphate. Its pathway is carbohydrate biosynthesis; gluconeogenesis. The protein operates within carbohydrate degradation; glycolysis; D-glyceraldehyde 3-phosphate from glycerone phosphate: step 1/1. In terms of biological role, involved in the gluconeogenesis. Catalyzes stereospecifically the conversion of dihydroxyacetone phosphate (DHAP) to D-glyceraldehyde-3-phosphate (G3P). The polypeptide is Triosephosphate isomerase (Citrifermentans bemidjiense (strain ATCC BAA-1014 / DSM 16622 / JCM 12645 / Bem) (Geobacter bemidjiensis)).